The sequence spans 550 residues: CTP synthase (550 aa).

The segment at 1–271 (MTRYIFITGG…DAEVLDVFGM (271 aa)) is amidoligase domain. S13 is a binding site for CTP. UTP is bound at residue S13. 14–19 (SLGKGL) provides a ligand contact to ATP. Residue Y54 coordinates L-glutamine. D71 provides a ligand contact to ATP. Mg(2+) contacts are provided by D71 and E145. CTP contacts are provided by residues 152–154 (DIE), 192–197 (KTKPTQ), and K228. UTP-binding positions include 192–197 (KTKPTQ) and K228. Positions 297–549 (TIAVVGKYTV…IAAAKEQGRL (253 aa)) constitute a Glutamine amidotransferase type-1 domain. An L-glutamine-binding site is contributed by G361. C388 acts as the Nucleophile; for glutamine hydrolysis in catalysis. L-glutamine contacts are provided by residues 389-392 (FGMQ), E412, and R477. Active-site residues include H522 and E524.

The protein belongs to the CTP synthase family. As to quaternary structure, homotetramer.

The enzyme catalyses UTP + L-glutamine + ATP + H2O = CTP + L-glutamate + ADP + phosphate + 2 H(+). It catalyses the reaction L-glutamine + H2O = L-glutamate + NH4(+). It carries out the reaction UTP + NH4(+) + ATP = CTP + ADP + phosphate + 2 H(+). The protein operates within pyrimidine metabolism; CTP biosynthesis via de novo pathway; CTP from UDP: step 2/2. Its activity is regulated as follows. Allosterically activated by GTP, when glutamine is the substrate; GTP has no effect on the reaction when ammonia is the substrate. The allosteric effector GTP functions by stabilizing the protein conformation that binds the tetrahedral intermediate(s) formed during glutamine hydrolysis. Inhibited by the product CTP, via allosteric rather than competitive inhibition. Catalyzes the ATP-dependent amination of UTP to CTP with either L-glutamine or ammonia as the source of nitrogen. Regulates intracellular CTP levels through interactions with the four ribonucleotide triphosphates. This Caulobacter sp. (strain K31) protein is CTP synthase.